A 316-amino-acid polypeptide reads, in one-letter code: HPr kinase/phosphorylase (316 aa).

Active-site residues include H143 and K164. 158–165 contacts ATP; the sequence is GEAGSGKS. A Mg(2+)-binding site is contributed by S165. The Proton acceptor; for phosphorylation activity. Proton donor; for dephosphorylation activity role is filled by D182. The interval 206-215 is important for the catalytic mechanism of both phosphorylation and dephosphorylation; sequence LEVRGLGVLN. Position 207 (E207) interacts with Mg(2+). Residue R251 is part of the active site. Residues 272–277 are important for the catalytic mechanism of dephosphorylation; it reads PVMPGR.

The protein belongs to the HPrK/P family. As to quaternary structure, homohexamer. Requires Mg(2+) as cofactor.

The enzyme catalyses [HPr protein]-L-serine + ATP = [HPr protein]-O-phospho-L-serine + ADP + H(+). It carries out the reaction [HPr protein]-O-phospho-L-serine + phosphate + H(+) = [HPr protein]-L-serine + diphosphate. In terms of biological role, catalyzes the ATP- as well as the pyrophosphate-dependent phosphorylation of a specific serine residue in HPr, a phosphocarrier protein of the phosphoenolpyruvate-dependent sugar phosphotransferase system (PTS). HprK/P also catalyzes the pyrophosphate-producing, inorganic phosphate-dependent dephosphorylation (phosphorolysis) of seryl-phosphorylated HPr (P-Ser-HPr). The chain is HPr kinase/phosphorylase from Xanthomonas oryzae pv. oryzae (strain MAFF 311018).